Here is a 489-residue protein sequence, read N- to C-terminus: Protein K15 (489 aa).

Positions 1–26 (MKTLIFFWNLWLWALLVCFWCITLVC) are cleaved as a signal peptide. 11 helical membrane passes run 29-49 (TNSI…VSAI), 63-83 (WPSS…WNLS), 89-109 (TYAC…LTLI), 121-141 (HGIL…VHMS), 148-168 (WIFF…FATV), 175-195 (LVSS…VSCC), 200-220 (CTAT…TGII), 237-257 (FLLL…LLAI), 264-284 (IKGH…LYVW), 296-316 (MLHL…VMLL), and 324-344 (ILTM…LLVF).

Interacts with host LYN; this interaction modulates B-cells signaling. Interacts with host ITSN2.

It is found in the host cell membrane. Its subcellular location is the host Golgi apparatus. It localises to the host trans-Golgi network. Its function is as follows. Plays a crucial role for reactivation of the virus from latency, early viral gene expression and virus production. Modulates host signaling pathways including activation of MAP kinases c-JUN-N-terminal kinase (JNK), ERK2, and NF-kappa-B resulting in the activation of AP-1 and NFAT-dependent gene expression in B-lymphocytes. When expressed in epithelial cells, induces the expression of several inflammatory and angiogenic genes. Also interferes with B-lymphocytes signaling through interaction with host LYN kinase. In Human herpesvirus 8 type P (isolate GK18) (HHV-8), this protein is Protein K15 (K15).